A 123-amino-acid chain; its full sequence is MIVGTGVDIVDIARFERQLERTPRLRERLFVPHERELAPRSLAARFAVKEAAAKALLAPPGMIWQDCWVSNDEHGAPHLHTTGTVARQQRARGVDTWHVSISHDGGMAVAFVVAEAQEGSRDD.

D8 and E50 together coordinate Mg(2+).

Belongs to the P-Pant transferase superfamily. AcpS family. The cofactor is Mg(2+).

The protein localises to the cytoplasm. It catalyses the reaction apo-[ACP] + CoA = holo-[ACP] + adenosine 3',5'-bisphosphate + H(+). Functionally, transfers the 4'-phosphopantetheine moiety from coenzyme A to a Ser of acyl-carrier-protein. This chain is Holo-[acyl-carrier-protein] synthase, found in Kocuria rhizophila (strain ATCC 9341 / DSM 348 / NBRC 103217 / DC2201).